We begin with the raw amino-acid sequence, 496 residues long: Probable cytosol aminopeptidase (496 aa).

Positions 262 and 267 each coordinate Mn(2+). Lys274 is an active-site residue. Residues Asp285, Asp344, and Glu346 each contribute to the Mn(2+) site. The active site involves Arg348.

This sequence belongs to the peptidase M17 family. Requires Mn(2+) as cofactor.

Its subcellular location is the cytoplasm. The catalysed reaction is Release of an N-terminal amino acid, Xaa-|-Yaa-, in which Xaa is preferably Leu, but may be other amino acids including Pro although not Arg or Lys, and Yaa may be Pro. Amino acid amides and methyl esters are also readily hydrolyzed, but rates on arylamides are exceedingly low.. It carries out the reaction Release of an N-terminal amino acid, preferentially leucine, but not glutamic or aspartic acids.. Its function is as follows. Presumably involved in the processing and regular turnover of intracellular proteins. Catalyzes the removal of unsubstituted N-terminal amino acids from various peptides. In Rhizobium johnstonii (strain DSM 114642 / LMG 32736 / 3841) (Rhizobium leguminosarum bv. viciae), this protein is Probable cytosol aminopeptidase.